A 95-amino-acid chain; its full sequence is MSLDAATKKQIITEFGTKEGDTGSPEVQVAMLSRRISDLTEHLKTHKHDHHSRRGLLILVGQRRRLLQYLAKKDIQRFRALVDRLGIRRGAAGAK.

The protein belongs to the universal ribosomal protein uS15 family. In terms of assembly, part of the 30S ribosomal subunit. Forms a bridge to the 50S subunit in the 70S ribosome, contacting the 23S rRNA.

One of the primary rRNA binding proteins, it binds directly to 16S rRNA where it helps nucleate assembly of the platform of the 30S subunit by binding and bridging several RNA helices of the 16S rRNA. In terms of biological role, forms an intersubunit bridge (bridge B4) with the 23S rRNA of the 50S subunit in the ribosome. The sequence is that of Small ribosomal subunit protein uS15 from Streptomyces avermitilis (strain ATCC 31267 / DSM 46492 / JCM 5070 / NBRC 14893 / NCIMB 12804 / NRRL 8165 / MA-4680).